Consider the following 248-residue polypeptide: tRNA1(Val) (adenine(37)-N6)-methyltransferase (248 aa).

It belongs to the methyltransferase superfamily. tRNA (adenine-N(6)-)-methyltransferase family.

The protein resides in the cytoplasm. The catalysed reaction is adenosine(37) in tRNA1(Val) + S-adenosyl-L-methionine = N(6)-methyladenosine(37) in tRNA1(Val) + S-adenosyl-L-homocysteine + H(+). Its function is as follows. Specifically methylates the adenine in position 37 of tRNA(1)(Val) (anticodon cmo5UAC). In Musicola paradisiaca (strain Ech703) (Dickeya paradisiaca), this protein is tRNA1(Val) (adenine(37)-N6)-methyltransferase.